The sequence spans 423 residues: Glutamyl-tRNA reductase (423 aa).

Residues 49 to 52 (TCNR), serine 109, 114 to 116 (EGQ), and glutamine 120 contribute to the substrate site. Cysteine 50 (nucleophile) is an active-site residue. 189–194 (GAGETG) serves as a coordination point for NADP(+).

This sequence belongs to the glutamyl-tRNA reductase family. Homodimer.

It catalyses the reaction (S)-4-amino-5-oxopentanoate + tRNA(Glu) + NADP(+) = L-glutamyl-tRNA(Glu) + NADPH + H(+). Its pathway is porphyrin-containing compound metabolism; protoporphyrin-IX biosynthesis; 5-aminolevulinate from L-glutamyl-tRNA(Glu): step 1/2. It participates in porphyrin-containing compound metabolism; chlorophyll biosynthesis. Its function is as follows. Catalyzes the NADPH-dependent reduction of glutamyl-tRNA(Glu) to glutamate 1-semialdehyde (GSA). The chain is Glutamyl-tRNA reductase from Chlorobium limicola (strain DSM 245 / NBRC 103803 / 6330).